We begin with the raw amino-acid sequence, 164 residues long: Protein HIT1 (164 aa).

Cys8, Cys11, Cys28, and Cys32 together coordinate Zn(2+). An HIT-type; degenerate zinc finger spans residues 8 to 49; sequence CGICRGVDGKYKCPKCGVRYCSLKCYKDAAKHVHKESEQPRA.

The polypeptide is Protein HIT1 (HIT1) (Saccharomyces cerevisiae (strain ATCC 204508 / S288c) (Baker's yeast)).